The primary structure comprises 267 residues: Ribosomal RNA large subunit methyltransferase E (267 aa).

S-adenosyl-L-methionine contacts are provided by G50, W52, D68, D84, and D109. Catalysis depends on K149, which acts as the Proton acceptor. Residues 196–255 (PLKIDDKFDVTIKKIGAKGNGIAFVEDFVVFMQDEVKKGENVRIKIVDVKPEFAFAIVIG) form the TRAM domain.

It belongs to the class I-like SAM-binding methyltransferase superfamily. RNA methyltransferase RlmE family.

The protein localises to the cytoplasm. The catalysed reaction is uridine(2552) in 23S rRNA + S-adenosyl-L-methionine = 2'-O-methyluridine(2552) in 23S rRNA + S-adenosyl-L-homocysteine + H(+). Specifically methylates the uridine in position 2552 of 23S rRNA at the 2'-O position of the ribose in the fully assembled 50S ribosomal subunit. In Methanococcoides burtonii (strain DSM 6242 / NBRC 107633 / OCM 468 / ACE-M), this protein is Ribosomal RNA large subunit methyltransferase E.